Reading from the N-terminus, the 508-residue chain is Photosystem II CP47 reaction center protein (508 aa).

6 consecutive transmembrane segments (helical) span residues 21–36 (AVHIMHTALVAGWAGS), 101–115 (ILFSGLCFLAAIWHW), 140–156 (GIHLFLSGLACFGFGAF), 203–218 (IAAGTLGILAGLFHLS), 237–252 (VLSSSIAAVFFAAFVV), and 457–472 (SFALLFFFGHIWHGAR).

It belongs to the PsbB/PsbC family. PsbB subfamily. In terms of assembly, PSII is composed of 1 copy each of membrane proteins PsbA, PsbB, PsbC, PsbD, PsbE, PsbF, PsbH, PsbI, PsbJ, PsbK, PsbL, PsbM, PsbT, PsbX, PsbY, PsbZ, Psb30/Ycf12, at least 3 peripheral proteins of the oxygen-evolving complex and a large number of cofactors. It forms dimeric complexes. It depends on Binds multiple chlorophylls. PSII binds additional chlorophylls, carotenoids and specific lipids. as a cofactor.

It localises to the plastid. It is found in the chloroplast thylakoid membrane. Functionally, one of the components of the core complex of photosystem II (PSII). It binds chlorophyll and helps catalyze the primary light-induced photochemical processes of PSII. PSII is a light-driven water:plastoquinone oxidoreductase, using light energy to abstract electrons from H(2)O, generating O(2) and a proton gradient subsequently used for ATP formation. The chain is Photosystem II CP47 reaction center protein from Oenothera argillicola (Appalachian evening primrose).